A 746-amino-acid chain; its full sequence is tRNA (cytosine(34)-C(5))-methyltransferase (746 aa).

The segment at M1–Q30 is disordered. Over residues R18–Q30 the composition is skewed to basic and acidic residues. S-adenosyl-L-methionine-binding positions include C184 to K190, D216, D243, and D270. C323 acts as the Nucleophile in catalysis. Disordered regions lie at residues Q454 to W475 and S701 to S746. A compositionally biased stretch (basic and acidic residues) spans A463–S472. A compositionally biased stretch (acidic residues) spans A704 to A714. Over residues A731 to S746 the composition is skewed to polar residues.

It belongs to the class I-like SAM-binding methyltransferase superfamily. RsmB/NOP family. TRM4 subfamily. In terms of tissue distribution, ubiquitously expressed during embryonic development. Some enrichment is observed in the proventriculus area of the foregut and in the hindgut.

The protein resides in the nucleus. It is found in the nucleolus. It catalyses the reaction cytidine(34) in tRNA precursor + S-adenosyl-L-methionine = 5-methylcytidine(34) in tRNA precursor + S-adenosyl-L-homocysteine + H(+). Its function is as follows. RNA methyltransferase that methylates tRNAs. Methylates cytosine to 5-methylcytosine (m5C) at position 34 of intron-containing tRNA(Leu)(CAA) precursors. Required for short-term memory. The chain is tRNA (cytosine(34)-C(5))-methyltransferase from Drosophila melanogaster (Fruit fly).